Consider the following 179-residue polypeptide: UPF0316 protein Ping_1367 (179 aa).

2 consecutive transmembrane segments (helical) span residues 28 to 48 (FLAS…SAQV) and 55 to 75 (WYLA…GISI).

Belongs to the UPF0316 family.

It is found in the cell membrane. The polypeptide is UPF0316 protein Ping_1367 (Psychromonas ingrahamii (strain DSM 17664 / CCUG 51855 / 37)).